The primary structure comprises 512 residues: Reduced folate transporter (512 aa).

Methionine 1 is modified (N-acetylmethionine). The Cytoplasmic segment spans residues 1 to 29; the sequence is MVPTGQVAEKQAYEEPRQDHELKSWRCLV. Residues 30–50 traverse the membrane as a helical segment; the sequence is FYLCFFGFMAQLRPGESFITP. Isoleucine 48 and threonine 49 together coordinate folate. Residues 51–62 lie on the Extracellular side of the membrane; the sequence is FLLERKFTKEQV. A helical transmembrane segment spans residues 63–85; the sequence is TNEIIPMLPYSHLAVLVPVFLLT. The Cytoplasmic segment spans residues 86-89; the sequence is DYLR. The chain crosses the membrane as a helical span at residues 90-110; it reads YKPVLVLQCLSFVCVWLLLLL. Topologically, residues 111–114 are extracellular; sequence GTSV. A helical transmembrane segment spans residues 115–137; sequence VHMQLMEVFYSVTMAARIAYSSY. Residues glutamate 121 and arginine 131 each contribute to the folate site. Residues 138-151 are Cytoplasmic-facing; that stretch reads IFSLVHPSRYQRMA. Residues 152–176 form a helical membrane-spanning segment; that stretch reads SYSRAAVLLGVFISSVLGQALVTVG. Valine 162 is a folate binding site. Residues 177 to 181 lie on the Extracellular side of the membrane; the sequence is HISTY. The chain crosses the membrane as a helical span at residues 182–200; sequence TLNCVSLGFILFSLVLSLF. The Cytoplasmic portion of the chain corresponds to 201–266; the sequence is LKRPKRSLFF…ELVENARQPQ (66 aa). A helical membrane pass occupies residues 267–292; it reads LRLWCLWWVFNSSGYYLITYYVHVLW. The folate site is built by tyrosine 281, tyrosine 282, and tyrosine 286. The Extracellular segment spans residues 293–300; it reads RSTDSSLS. A helical transmembrane segment spans residues 301–323; it reads YNGAVDAASTLLSAITSFSAGFL. The Cytoplasmic segment spans residues 324 to 329; the sequence is SIRWTL. The helical transmembrane segment at 330-350 threads the bilayer; the sequence is WSKLVIAGVIAIQASLVFCMF. Residues 351–353 are Extracellular-facing; it reads QIR. The chain crosses the membrane as a helical span at residues 354-377; the sequence is DIWVCYVTFVLFRGAYQFLVPIAT. 2 residues coordinate folate: arginine 366 and glutamine 370. Residues 378–391 are Cytoplasmic-facing; it reads FQIASSLSKELCAL. The chain crosses the membrane as a helical span at residues 392 to 415; sequence VFGINTFLATALKTCITLVVSDKR. The required for substrate-binding stretch occupies residues 400–412; the sequence is ATALKTCITLVVS. Residues 416 to 423 lie on the Extracellular side of the membrane; that stretch reads GLGLQVRD. The helical transmembrane segment at 424-448 threads the bilayer; that stretch reads QFRIYFIYFLMLSITCFAWAGLDGL. Over 449–512 the chain is Cytoplasmic; it reads RYCQRGRHQP…RGDLRVEAKA (64 aa). Serine 467, serine 472, and serine 477 each carry phosphoserine. The tract at residues 478–512 is disordered; sequence LQDGDLRGPQPSAPQLLSEDGMEDDRGDLRVEAKA.

Belongs to the reduced folate carrier (RFC) transporter (TC 2.A.48) family.

The protein resides in the cell membrane. The protein localises to the apical cell membrane. It localises to the basolateral cell membrane. The enzyme catalyses 5-amino-1-(5-phospho-beta-D-ribosyl)imidazole-4-carboxamide(in) + (6S)-5-methyl-5,6,7,8-tetrahydrofolate(out) = 5-amino-1-(5-phospho-beta-D-ribosyl)imidazole-4-carboxamide(out) + (6S)-5-methyl-5,6,7,8-tetrahydrofolate(in). Its function is as follows. Antiporter that mediates the import of reduced folates, driven by the export of organic anions. Also acts as an importer of immunoreactive cyclic dinucleotides, but with a lower transporter activity. Mechanistically, acts as a secondary active transporter, which exports intracellular organic anions down their concentration gradients to facilitate the uptake of its substrates. Has high affinity for N5-methyltetrahydrofolate, the predominant circulating form of folate. Also mediates the import of antifolate drug methotrexate. 5-amino-4-imidazolecarboxamide riboside (AICAR), when phosphorylated to AICAR monophosphate, can serve as an organic anion for antiporter activity. The protein is Reduced folate transporter of Mus musculus (Mouse).